Consider the following 206-residue polypeptide: Small ribosomal subunit protein uS4 (206 aa).

The S4 RNA-binding domain maps to 96–158 (SRLDNVVYRM…AKKQSRIKAA (63 aa)).

This sequence belongs to the universal ribosomal protein uS4 family. Part of the 30S ribosomal subunit. Contacts protein S5. The interaction surface between S4 and S5 is involved in control of translational fidelity.

In terms of biological role, one of the primary rRNA binding proteins, it binds directly to 16S rRNA where it nucleates assembly of the body of the 30S subunit. With S5 and S12 plays an important role in translational accuracy. This chain is Small ribosomal subunit protein uS4, found in Wigglesworthia glossinidia brevipalpis.